The following is a 501-amino-acid chain: Ribose import ATP-binding protein RbsA (501 aa).

ABC transporter domains lie at 5-241 (LSLE…VGRK) and 252-498 (LRND…TGGV). 37-44 (GENGAGKS) is a binding site for ATP.

Belongs to the ABC transporter superfamily. Ribose importer (TC 3.A.1.2.1) family. The complex is composed of an ATP-binding protein (RbsA), two transmembrane proteins (RbsC) and a solute-binding protein (RbsB).

It localises to the cell inner membrane. It carries out the reaction D-ribose(out) + ATP + H2O = D-ribose(in) + ADP + phosphate + H(+). Functionally, part of the ABC transporter complex RbsABC involved in ribose import. Responsible for energy coupling to the transport system. This Hahella chejuensis (strain KCTC 2396) protein is Ribose import ATP-binding protein RbsA.